The chain runs to 665 residues: DNA ligase (665 aa).

NAD(+) contacts are provided by residues 32–36 (DSEYD), 81–82 (SL), and Glu-110. Lys-112 serves as the catalytic N6-AMP-lysine intermediate. Residues Arg-133, Glu-167, Lys-283, and Lys-307 each contribute to the NAD(+) site. The Zn(2+) site is built by Cys-401, Cys-404, Cys-419, and Cys-424. The BRCT domain maps to 586-665 (EGHPDFSGKT…AAFIEKQNGI (80 aa)).

Belongs to the NAD-dependent DNA ligase family. LigA subfamily. Requires Mg(2+) as cofactor. The cofactor is Mn(2+).

The catalysed reaction is NAD(+) + (deoxyribonucleotide)n-3'-hydroxyl + 5'-phospho-(deoxyribonucleotide)m = (deoxyribonucleotide)n+m + AMP + beta-nicotinamide D-nucleotide.. DNA ligase that catalyzes the formation of phosphodiester linkages between 5'-phosphoryl and 3'-hydroxyl groups in double-stranded DNA using NAD as a coenzyme and as the energy source for the reaction. It is essential for DNA replication and repair of damaged DNA. The protein is DNA ligase of Staphylococcus epidermidis (strain ATCC 35984 / DSM 28319 / BCRC 17069 / CCUG 31568 / BM 3577 / RP62A).